Here is a 78-residue protein sequence, read N- to C-terminus: Putative membrane protein insertion efficiency factor (78 aa).

This sequence belongs to the UPF0161 family.

Its subcellular location is the cell inner membrane. Its function is as follows. Could be involved in insertion of integral membrane proteins into the membrane. The protein is Putative membrane protein insertion efficiency factor of Prochlorococcus marinus (strain MIT 9312).